Here is a 592-residue protein sequence, read N- to C-terminus: Putative RING finger protein ORF9 (592 aa).

The RING-type zinc finger occupies 12–49 (CCICLEEDIERVDTIPCQHTVCRPCYLKPMINKCPVCR). Positions 414 to 441 (WELIKREELLQRRYKREEQNLKYTSNRL) form a coiled coil.

The sequence is that of Putative RING finger protein ORF9 from Ostreid herpesvirus 1 (isolate France) (OsHV-1).